The primary structure comprises 495 residues: Flagellin (495 aa).

Belongs to the bacterial flagellin family.

The protein localises to the secreted. The protein resides in the bacterial flagellum. Its function is as follows. Flagellin is the subunit protein which polymerizes to form the filaments of bacterial flagella. This chain is Flagellin (fliC), found in Salmonella paratyphi A (strain ATCC 9150 / SARB42).